The following is a 490-amino-acid chain: 2,3-bisphosphoglycerate-independent phosphoglycerate mutase (490 aa).

2 residues coordinate Mn(2+): Asp9 and Ser59. The active-site Phosphoserine intermediate is the Ser59. Substrate contacts are provided by residues His116, 145–146, Arg175, Arg181, 246–249, and Lys319; these read RD and RSDR. The Mn(2+) site is built by Asp385, His389, Asp426, His427, and His444.

This sequence belongs to the BPG-independent phosphoglycerate mutase family. Monomer. Requires Mn(2+) as cofactor.

The catalysed reaction is (2R)-2-phosphoglycerate = (2R)-3-phosphoglycerate. The protein operates within carbohydrate degradation; glycolysis; pyruvate from D-glyceraldehyde 3-phosphate: step 3/5. Its function is as follows. Catalyzes the interconversion of 2-phosphoglycerate and 3-phosphoglycerate. The polypeptide is 2,3-bisphosphoglycerate-independent phosphoglycerate mutase (Helicobacter hepaticus (strain ATCC 51449 / 3B1)).